The following is a 327-amino-acid chain: uncharacterized protein (327 aa).

Residues 12–84 form the S4 RNA-binding domain; it reads MRIDRYLTQQ…IPITILYEDD (73 aa). Residue Asp-137 is part of the active site.

The protein belongs to the pseudouridine synthase RluA family.

It carries out the reaction a uridine in RNA = a pseudouridine in RNA. This is an uncharacterized protein from Chlorobaculum parvum (strain DSM 263 / NCIMB 8327) (Chlorobium vibrioforme subsp. thiosulfatophilum).